The following is a 121-amino-acid chain: MQAKLIEILESSQIRLYPQFQPGDNVRVYFKIQEGNKTRIQIFEGLVIKFKKNGLSSNFVVRKISHNVGVERTFLLHSPLVDKVEVIRSNKVRRAKLYYMKKRSGKSARLKEIKRKELKNL.

The protein belongs to the bacterial ribosomal protein bL19 family.

In terms of biological role, this protein is located at the 30S-50S ribosomal subunit interface and may play a role in the structure and function of the aminoacyl-tRNA binding site. The chain is Large ribosomal subunit protein bL19 from Mesomycoplasma hyopneumoniae (strain 7448) (Mycoplasma hyopneumoniae).